Here is a 505-residue protein sequence, read N- to C-terminus: tRNA-2-methylthio-N(6)-dimethylallyladenosine synthase (505 aa).

An MTTase N-terminal domain is found at 14–132 (RTYEVRTYGC…LPVLLERARV (119 aa)). The [4Fe-4S] cluster site is built by C23, C61, C95, C169, C173, and C176. One can recognise a Radical SAM core domain in the interval 155–386 (RESAYAAWVS…ALQEEISWDE (232 aa)). In terms of domain architecture, TRAM spans 388–456 (KKQVGRTLEL…PHHLLAEGAV (69 aa)).

Belongs to the methylthiotransferase family. MiaB subfamily. As to quaternary structure, monomer. [4Fe-4S] cluster is required as a cofactor.

It localises to the cytoplasm. The catalysed reaction is N(6)-dimethylallyladenosine(37) in tRNA + (sulfur carrier)-SH + AH2 + 2 S-adenosyl-L-methionine = 2-methylsulfanyl-N(6)-dimethylallyladenosine(37) in tRNA + (sulfur carrier)-H + 5'-deoxyadenosine + L-methionine + A + S-adenosyl-L-homocysteine + 2 H(+). Its function is as follows. Catalyzes the methylthiolation of N6-(dimethylallyl)adenosine (i(6)A), leading to the formation of 2-methylthio-N6-(dimethylallyl)adenosine (ms(2)i(6)A) at position 37 in tRNAs that read codons beginning with uridine. In Streptomyces coelicolor (strain ATCC BAA-471 / A3(2) / M145), this protein is tRNA-2-methylthio-N(6)-dimethylallyladenosine synthase.